The following is a 1551-amino-acid chain: Pentafunctional AROM polypeptide (1551 aa).

The 3-dehydroquinate synthase stretch occupies residues M1–K379. Residues D42–N44, E80–K83, G111–V113, and D116 contribute to the NAD(+) site. R127 is a 7-phospho-2-dehydro-3-deoxy-D-arabino-heptonate binding site. T136–T137 lines the NAD(+) pocket. D143 and K149 together coordinate 7-phospho-2-dehydro-3-deoxy-D-arabino-heptonate. K158 lines the NAD(+) pocket. N159 provides a ligand contact to 7-phospho-2-dehydro-3-deoxy-D-arabino-heptonate. Residues Y176–S179 and N187 contribute to the NAD(+) site. E191 is a Zn(2+) binding site. 7-phospho-2-dehydro-3-deoxy-D-arabino-heptonate is bound by residues E191 to K194 and K243. E253 acts as the Proton acceptor; for 3-dehydroquinate synthase activity in catalysis. Residues R257–N261 and H264 contribute to the 7-phospho-2-dehydro-3-deoxy-D-arabino-heptonate site. Residue H264 coordinates Zn(2+). Catalysis depends on H268, which acts as the Proton acceptor; for 3-dehydroquinate synthase activity. 2 residues coordinate 7-phospho-2-dehydro-3-deoxy-D-arabino-heptonate: H280 and K351. H280 contacts Zn(2+). An EPSP synthase region spans residues V392–I838. The tract at residues D858–S1048 is shikimate kinase. G865–S872 is an ATP binding site. Positions L1049–E1258 are 3-dehydroquinase. The active-site Schiff-base intermediate with substrate; for 3-dehydroquinate dehydratase activity is the K1194. A shikimate dehydrogenase region spans residues A1271–E1551.

It in the N-terminal section; belongs to the sugar phosphate cyclases superfamily. Dehydroquinate synthase family. This sequence in the 2nd section; belongs to the EPSP synthase family. The protein in the 3rd section; belongs to the shikimate kinase family. In the 4th section; belongs to the type-I 3-dehydroquinase family. It in the C-terminal section; belongs to the shikimate dehydrogenase family. As to quaternary structure, homodimer. Zn(2+) serves as cofactor.

It localises to the cytoplasm. The catalysed reaction is 7-phospho-2-dehydro-3-deoxy-D-arabino-heptonate = 3-dehydroquinate + phosphate. It catalyses the reaction 3-dehydroquinate = 3-dehydroshikimate + H2O. The enzyme catalyses shikimate + NADP(+) = 3-dehydroshikimate + NADPH + H(+). It carries out the reaction shikimate + ATP = 3-phosphoshikimate + ADP + H(+). The catalysed reaction is 3-phosphoshikimate + phosphoenolpyruvate = 5-O-(1-carboxyvinyl)-3-phosphoshikimate + phosphate. It functions in the pathway metabolic intermediate biosynthesis; chorismate biosynthesis; chorismate from D-erythrose 4-phosphate and phosphoenolpyruvate: step 2/7. The protein operates within metabolic intermediate biosynthesis; chorismate biosynthesis; chorismate from D-erythrose 4-phosphate and phosphoenolpyruvate: step 3/7. Its pathway is metabolic intermediate biosynthesis; chorismate biosynthesis; chorismate from D-erythrose 4-phosphate and phosphoenolpyruvate: step 4/7. It participates in metabolic intermediate biosynthesis; chorismate biosynthesis; chorismate from D-erythrose 4-phosphate and phosphoenolpyruvate: step 5/7. It functions in the pathway metabolic intermediate biosynthesis; chorismate biosynthesis; chorismate from D-erythrose 4-phosphate and phosphoenolpyruvate: step 6/7. The AROM polypeptide catalyzes 5 consecutive enzymatic reactions in prechorismate polyaromatic amino acid biosynthesis. This is Pentafunctional AROM polypeptide from Candida tropicalis (strain ATCC MYA-3404 / T1) (Yeast).